The sequence spans 511 residues: L-arabinose isomerase (511 aa).

Mn(2+) is bound by residues glutamate 316, glutamate 343, histidine 360, and histidine 459.

It belongs to the arabinose isomerase family. It depends on Mn(2+) as a cofactor.

It carries out the reaction beta-L-arabinopyranose = L-ribulose. The protein operates within carbohydrate degradation; L-arabinose degradation via L-ribulose; D-xylulose 5-phosphate from L-arabinose (bacterial route): step 1/3. In terms of biological role, catalyzes the conversion of L-arabinose to L-ribulose. This is L-arabinose isomerase from Arthrobacter sp. (strain FB24).